We begin with the raw amino-acid sequence, 267 residues long: Putative metal-binding protein TM_0123 (267 aa).

The first 15 residues, 1–15 (MKKILLLLVLIVAVL), serve as a signal peptide directing secretion. Residues His53, His107, and His172 each coordinate a divalent metal cation.

It belongs to the bacterial solute-binding protein 9 family.

It is found in the periplasm. Part of an ATP-binding cassette (ABC) transport system involved in metal import. Binds a metal with high affinity and specificity and delivers it to the membrane permease for translocation into the cytoplasm. The protein is Putative metal-binding protein TM_0123 of Thermotoga maritima (strain ATCC 43589 / DSM 3109 / JCM 10099 / NBRC 100826 / MSB8).